The chain runs to 414 residues: Serine hydroxymethyltransferase (414 aa).

(6S)-5,6,7,8-tetrahydrofolate is bound by residues Leu-116 and 120 to 122 (GHL). Residue Lys-225 is modified to N6-(pyridoxal phosphate)lysine. 349–351 (SPF) serves as a coordination point for (6S)-5,6,7,8-tetrahydrofolate.

It belongs to the SHMT family. As to quaternary structure, homodimer. Pyridoxal 5'-phosphate is required as a cofactor.

It localises to the cytoplasm. It carries out the reaction (6R)-5,10-methylene-5,6,7,8-tetrahydrofolate + glycine + H2O = (6S)-5,6,7,8-tetrahydrofolate + L-serine. It functions in the pathway one-carbon metabolism; tetrahydrofolate interconversion. Its pathway is amino-acid biosynthesis; glycine biosynthesis; glycine from L-serine: step 1/1. In terms of biological role, catalyzes the reversible interconversion of serine and glycine with tetrahydrofolate (THF) serving as the one-carbon carrier. This reaction serves as the major source of one-carbon groups required for the biosynthesis of purines, thymidylate, methionine, and other important biomolecules. Also exhibits THF-independent aldolase activity toward beta-hydroxyamino acids, producing glycine and aldehydes, via a retro-aldol mechanism. The chain is Serine hydroxymethyltransferase from Oenococcus oeni (strain ATCC BAA-331 / PSU-1).